Consider the following 333-residue polypeptide: Lipoyl synthase (333 aa).

Polar residues predominate over residues 1–15; it reads MSTLVESPVPSNDSQ. Residues 1 to 34 are disordered; sequence MSTLVESPVPSNDSQAAAPAAYDPTQKQKSQAKT. Residues C80, C85, C91, C106, C110, C113, and S320 each coordinate [4Fe-4S] cluster. Residues 91 to 309 form the Radical SAM core domain; it reads CFGKGTATFM…EREAYAMGFT (219 aa).

This sequence belongs to the radical SAM superfamily. Lipoyl synthase family. [4Fe-4S] cluster serves as cofactor.

The protein resides in the cytoplasm. It carries out the reaction [[Fe-S] cluster scaffold protein carrying a second [4Fe-4S](2+) cluster] + N(6)-octanoyl-L-lysyl-[protein] + 2 oxidized [2Fe-2S]-[ferredoxin] + 2 S-adenosyl-L-methionine + 4 H(+) = [[Fe-S] cluster scaffold protein] + N(6)-[(R)-dihydrolipoyl]-L-lysyl-[protein] + 4 Fe(3+) + 2 hydrogen sulfide + 2 5'-deoxyadenosine + 2 L-methionine + 2 reduced [2Fe-2S]-[ferredoxin]. The protein operates within protein modification; protein lipoylation via endogenous pathway; protein N(6)-(lipoyl)lysine from octanoyl-[acyl-carrier-protein]: step 2/2. Its function is as follows. Catalyzes the radical-mediated insertion of two sulfur atoms into the C-6 and C-8 positions of the octanoyl moiety bound to the lipoyl domains of lipoate-dependent enzymes, thereby converting the octanoylated domains into lipoylated derivatives. The chain is Lipoyl synthase from Bordetella bronchiseptica (strain ATCC BAA-588 / NCTC 13252 / RB50) (Alcaligenes bronchisepticus).